A 292-amino-acid chain; its full sequence is NIF3-like protein 1 (292 aa).

Belongs to the GTP cyclohydrolase I type 2/NIF3 family.

The protein is NIF3-like protein 1 (anon-35F/36A) of Drosophila melanogaster (Fruit fly).